Consider the following 155-residue polypeptide: SsrA-binding protein (155 aa).

Belongs to the SmpB family.

It is found in the cytoplasm. Its function is as follows. Required for rescue of stalled ribosomes mediated by trans-translation. Binds to transfer-messenger RNA (tmRNA), required for stable association of tmRNA with ribosomes. tmRNA and SmpB together mimic tRNA shape, replacing the anticodon stem-loop with SmpB. tmRNA is encoded by the ssrA gene; the 2 termini fold to resemble tRNA(Ala) and it encodes a 'tag peptide', a short internal open reading frame. During trans-translation Ala-aminoacylated tmRNA acts like a tRNA, entering the A-site of stalled ribosomes, displacing the stalled mRNA. The ribosome then switches to translate the ORF on the tmRNA; the nascent peptide is terminated with the 'tag peptide' encoded by the tmRNA and targeted for degradation. The ribosome is freed to recommence translation, which seems to be the essential function of trans-translation. The chain is SsrA-binding protein from Streptococcus uberis (strain ATCC BAA-854 / 0140J).